Consider the following 81-residue polypeptide: Serine/arginine-rich splicing factor 6 (81 aa).

Positions 1 to 48 (RSRSRSRRSSRSRSRSISKSRSRSRSRSKGRSRSRSKGRKSRSKSKSK) are enriched in basic residues. A disordered region spans residues 1-81 (RSRSRSRRSS…SRSRSRSRSP (81 aa)). The span at 62–71 (RSKDEYEKSR) shows a compositional bias: basic and acidic residues. Over residues 72-81 (SRSRSRSRSP) the composition is skewed to basic residues.

The protein belongs to the splicing factor SR family. In terms of assembly, binds SREK1/SFRS12. Interacts with DYRK1A. Extensively phosphorylated on serine residues in the RS domain. Phosphorylated by DYRK1A, probably in the RS domain. Phosphorylation by DYRK1A modulates alternative splice site selection and inhibits the expression of MAPT/Tau exon 10.

The protein resides in the nucleus. It localises to the nucleus speckle. Plays a role in constitutive splicing and modulates the selection of alternative splice sites. Plays a role in the alternative splicing of MAPT/Tau exon 10. Binds to alternative exons of TNC pre-mRNA and promotes the expression of alternatively spliced TNC. Plays a role in wound healing and in the regulation of keratinocyte differentiation and proliferation via its role in alternative splicing. The polypeptide is Serine/arginine-rich splicing factor 6 (SRSF6) (Oryctolagus cuniculus (Rabbit)).